Consider the following 620-residue polypeptide: Chaperone protein HscA homolog (620 aa).

This sequence belongs to the heat shock protein 70 family.

Chaperone involved in the maturation of iron-sulfur cluster-containing proteins. Has a low intrinsic ATPase activity which is markedly stimulated by HscB. The protein is Chaperone protein HscA homolog of Neisseria meningitidis serogroup A / serotype 4A (strain DSM 15465 / Z2491).